A 315-amino-acid polypeptide reads, in one-letter code: MKKAVILFNLGGPDSLNAVRPFLFNLFYDRRIINLPNPFRFLLAKFISAKRENTARKIYEEIGGKSPILENTKMQANASELKLNENRNHVHKVFICMRYWRPFADEVIESVKQFDPDEVILLPLYPQYSTTTTLSSIENWQKNAKRYGLKCNTKMIHRYYDNQDFIEAHTNLIAKYYKLARKIGKPRVLFSAHSLPLSIIKKGDPYASQVERSVELIVEKLAINNLDWSICYQSKIGPVKWLEPSTESELLRAKADGVPVVLSPISFVSEHSETLVELDIEYKAIIKDGYYFRVPTLSTDPLFIKCLADLCINLP.

Residues H193 and E273 each coordinate Fe cation.

Belongs to the ferrochelatase family.

The protein resides in the cytoplasm. It carries out the reaction heme b + 2 H(+) = protoporphyrin IX + Fe(2+). It functions in the pathway porphyrin-containing compound metabolism; protoheme biosynthesis; protoheme from protoporphyrin-IX: step 1/1. Its function is as follows. Catalyzes the ferrous insertion into protoporphyrin IX. This chain is Ferrochelatase, found in Wolbachia pipientis wMel.